A 531-amino-acid chain; its full sequence is MPVKCISVLLLLLQLSCCFSSGSCGKVLVWPMEFSHWMNMKTILDALVQQGHEVTVLRSSASIVIGSNNESGIKFETFHTSYRKDEIENFFMDWFYKMIYNVSIESYWETFSLTKMVILKYSDICEDICKEVILNKKLMTKLQESRFDVVLADPVSPGGELLAELLKIPLVYSLRGFVGYMLQKHGGGLLLPPSYVPVMMSGLGSQMTFMERVQNLLCVLYFDFWFPKFNEKRWDQFYSEVLGRPVTFLELMGKADMWLIRSYWDLEFPRPLLPNFDFIGGLHCKPAKPLPQEMEDFVQSSGEEGVVVFSLGSMISNLTEERANVIASALAQLPQKVLWRFEGKKPDMLGSNTRLYKWIPQNDLLGHPKTKAFITHGGANGVFEAIYHGIPMVGLPLFGDQLDNIVYMKAKGAAVKLNLKTMSSADLLNALKTVINDPSYKENAMTLSRIHHDQPMKPLDRAVFWIEYVMRHKGAKHLRVAAHDLTWYQYHSLDVIGFLLACVAITTYLIVKCCLLVYRYVLGAGKKKKRD.

The signal sequence occupies residues 1–24 (MPVKCISVLLLLLQLSCCFSSGSC). 3 N-linked (GlcNAc...) asparagine glycosylation sites follow: Asn69, Asn101, and Asn317. Residues 495 to 511 (VIGFLLACVAITTYLIV) form a helical membrane-spanning segment.

Belongs to the UDP-glycosyltransferase family.

It is found in the microsome membrane. It localises to the endoplasmic reticulum membrane. The enzyme catalyses glucuronate acceptor + UDP-alpha-D-glucuronate = acceptor beta-D-glucuronoside + UDP + H(+). Its function is as follows. UDPGT is of major importance in the conjugation and subsequent elimination of potentially toxic xenobiotics and endogenous compounds. Acts on small phenolic agents such as 2-beta-naphthol and 4-methylumbelliferone as well as bulky phenolic compounds like 2-hydroxy- and 4-hydroxybiphenyl. In contrast to 2B16 it is active toward octylgallate. The polypeptide is UDP-glucuronosyltransferase 2B13 (UGT2B13) (Oryctolagus cuniculus (Rabbit)).